The primary structure comprises 719 residues: Catalase-3 (719 aa).

The signal sequence occupies residues 1–18; sequence MRVNALLPLSGLIGTALA. Positions 19–30 are excised as a propeptide; that stretch reads ACPFADPSALGR. Residues His102 and Asn175 contribute to the active site. Tyr389 serves as a coordination point for heme.

This sequence belongs to the catalase family. Heme is required as a cofactor.

The enzyme catalyses 2 H2O2 = O2 + 2 H2O. Occurs in almost all aerobically respiring organisms and serves to protect cells from the toxic effects of hydrogen peroxide. This is Catalase-3 (cat-3) from Neurospora crassa (strain ATCC 24698 / 74-OR23-1A / CBS 708.71 / DSM 1257 / FGSC 987).